A 198-amino-acid polypeptide reads, in one-letter code: Holliday junction branch migration complex subunit RuvA (198 aa).

Positions 1–63 (MYSYIIGVIT…EDASILYGFS (63 aa)) are domain I. The interval 64–142 (SQKERELFNL…KDFVPSEKPV (79 aa)) is domain II. Residues 143 to 153 (NKEVKRSNDSE) form a flexible linker region. The interval 153–198 (EFAREALLQLGYFKNDVDAFIENTDISGLSIEDIMKKAMKSLDSSR) is domain III.

The protein belongs to the RuvA family. As to quaternary structure, homotetramer. Forms an RuvA(8)-RuvB(12)-Holliday junction (HJ) complex. HJ DNA is sandwiched between 2 RuvA tetramers; dsDNA enters through RuvA and exits via RuvB. An RuvB hexamer assembles on each DNA strand where it exits the tetramer. Each RuvB hexamer is contacted by two RuvA subunits (via domain III) on 2 adjacent RuvB subunits; this complex drives branch migration. In the full resolvosome a probable DNA-RuvA(4)-RuvB(12)-RuvC(2) complex forms which resolves the HJ.

The protein localises to the cytoplasm. Its function is as follows. The RuvA-RuvB-RuvC complex processes Holliday junction (HJ) DNA during genetic recombination and DNA repair, while the RuvA-RuvB complex plays an important role in the rescue of blocked DNA replication forks via replication fork reversal (RFR). RuvA specifically binds to HJ cruciform DNA, conferring on it an open structure. The RuvB hexamer acts as an ATP-dependent pump, pulling dsDNA into and through the RuvAB complex. HJ branch migration allows RuvC to scan DNA until it finds its consensus sequence, where it cleaves and resolves the cruciform DNA. The chain is Holliday junction branch migration complex subunit RuvA from Finegoldia magna (strain ATCC 29328 / DSM 20472 / WAL 2508) (Peptostreptococcus magnus).